A 1067-amino-acid polypeptide reads, in one-letter code: Receptor-type guanylate cyclase gcy-10 (1067 aa).

The signal sequence occupies residues 1-20 (MLKSLLIIVIVFLHRELCDG). The Extracellular portion of the chain corresponds to 21–438 (IQLILFDNWP…CVAKSSCVNY (418 aa)). Asn411 carries N-linked (GlcNAc...) asparagine glycosylation. Residues 439-459 (IPHIIAAVVIVTIIVIAIVII) traverse the membrane as a helical segment. Over 460-1067 (VKQRRHKLNI…RGSIVPLQKA (608 aa)) the chain is Cytoplasmic. The region spanning 509 to 791 (ALTSRRRVFG…ESISTVYPLS (283 aa)) is the Protein kinase domain. Residues 515–523 (RVFGSYALV) and Lys534 contribute to the ATP site. The Guanylate cyclase domain maps to 859 to 989 (TVMFVQICDF…DTVNFASRMQ (131 aa)).

Belongs to the adenylyl cyclase class-4/guanylyl cyclase family. Expressed predominantly in AWC but also in AWB, ASI, ASJ and ASK sensory neurons and in I1 interneuron.

It localises to the cell membrane. Its subcellular location is the cell projection. It is found in the cilium. It carries out the reaction GTP = 3',5'-cyclic GMP + diphosphate. Guanylate cyclase involved in the production of the second messenger cGMP. Regulates chemotaxis responses toward volatile odorants in AWC sensory neurons and their avoidance in AWB sensory neurons. May be involved in sensitivity to quinine by regulating egl-4 activity through the production of cGMP. Involved in phototransduction in ASJ neurons downstream of G protein coupled-photoreceptor lite-1. Required to maintain the expression of putative olfactory receptor str-2 in AWC neurons in adults. In AWB and AWC sensory neurons, mediates the recognition of food oders which subsequently allows for the detection of preferred food sources. Involved in AWB sensory neuron development and extension during postembryonic development, potentially via mediating localization of tub-1 and PI(4,5)P2 to membrane cilia. This chain is Receptor-type guanylate cyclase gcy-10, found in Caenorhabditis elegans.